Here is an 831-residue protein sequence, read N- to C-terminus: Glucan 1,3-beta-glucosidase D (831 aa).

A compositionally biased stretch (basic and acidic residues) spans 1–21 (MPSQSRSRDRYGRDSDRDRSR). Disordered regions lie at residues 1-246 (MPSQ…RGQS) and 261-288 (APDMEVRLRGGGRGPPRERRWEKDSDGS). Over 1–300 (MPSQSRSRDR…LTPFWKRKKW (300 aa)) the chain is Cytoplasmic. Acidic residues predominate over residues 32–41 (EDDDDDDDFD). 3 stretches are compositionally biased toward basic and acidic residues: residues 42–70 (DNPRDRRYRRDGYRRAPVDSRAYDSHDDY), 78–94 (EPRRYRSDTERRRERAR), and 151–177 (DAARRLRRRERERERERRAETSKHKST). The span at 178–195 (DSSNSSAGLLNANALAKL) shows a compositional bias: low complexity. 2 stretches are compositionally biased toward basic and acidic residues: residues 197-216 (AQHEELDRQEQRRAEKEAKA) and 275-286 (PPRERRWEKDSD). Residues 301-321 (WWIGAIVLVIVVIIIVVAVVV) traverse the membrane as a helical; Signal-anchor for type II membrane protein segment. At 322-831 (SNNKKSDSDS…PSFGNLPEYY (510 aa)) the chain is on the extracellular side. Residues 325 to 360 (KKSDSDSDSDSNSGSSDSWGGDKSSLNGLDHDSIPK) form a disordered region. Residues 334-350 (DSNSGSSDSWGGDKSSL) are compositionally biased toward low complexity. Asparagine 379, asparagine 396, and asparagine 547 each carry an N-linked (GlcNAc...) asparagine glycan. Glutamate 598 functions as the Proton donor in the catalytic mechanism. N-linked (GlcNAc...) asparagine glycosylation is found at asparagine 611, asparagine 637, asparagine 670, and asparagine 690. The active-site Nucleophile is the glutamate 703.

The protein belongs to the glycosyl hydrolase 5 (cellulase A) family.

It is found in the cell membrane. It carries out the reaction Successive hydrolysis of beta-D-glucose units from the non-reducing ends of (1-&gt;3)-beta-D-glucans, releasing alpha-glucose.. Glucosidase involved in the degradation of cellulosic biomass. Active on lichenan. The sequence is that of Glucan 1,3-beta-glucosidase D (exgD) from Emericella nidulans (strain FGSC A4 / ATCC 38163 / CBS 112.46 / NRRL 194 / M139) (Aspergillus nidulans).